The chain runs to 260 residues: Indole-3-glycerol phosphate synthase (260 aa).

The protein belongs to the TrpC family.

The enzyme catalyses 1-(2-carboxyphenylamino)-1-deoxy-D-ribulose 5-phosphate + H(+) = (1S,2R)-1-C-(indol-3-yl)glycerol 3-phosphate + CO2 + H2O. Its pathway is amino-acid biosynthesis; L-tryptophan biosynthesis; L-tryptophan from chorismate: step 4/5. In Nocardioides sp. (strain ATCC BAA-499 / JS614), this protein is Indole-3-glycerol phosphate synthase.